A 200-amino-acid chain; its full sequence is Dephospho-CoA kinase (200 aa).

One can recognise a DPCK domain in the interval 4–200 (VIGLTGGIAS…AILKKWNIID (197 aa)). 12–17 (ASGKST) serves as a coordination point for ATP.

Belongs to the CoaE family.

The protein localises to the cytoplasm. It carries out the reaction 3'-dephospho-CoA + ATP = ADP + CoA + H(+). The protein operates within cofactor biosynthesis; coenzyme A biosynthesis; CoA from (R)-pantothenate: step 5/5. Catalyzes the phosphorylation of the 3'-hydroxyl group of dephosphocoenzyme A to form coenzyme A. This chain is Dephospho-CoA kinase, found in Bacillus cereus (strain ZK / E33L).